The following is a 342-amino-acid chain: Cell division protein FtsQ (342 aa).

Residues 1-80 are Cytoplasmic-facing; it reads MDGAGSLTRS…ALVERYLPRR (80 aa). Residues 81–99 traverse the membrane as a helical segment; that stretch reads VGISMTVLLLIGSCGFGIV. Residues 100-342 are Periplasmic-facing; sequence KGGHLQDFVT…KKKKKAGDAA (243 aa). A POTRA domain is found at 124-192; that stretch reads FRITSVVING…GQLMIELTER (69 aa).

This sequence belongs to the FtsQ/DivIB family. FtsQ subfamily.

The protein resides in the cell inner membrane. Essential cell division protein. The chain is Cell division protein FtsQ from Bradyrhizobium diazoefficiens (strain JCM 10833 / BCRC 13528 / IAM 13628 / NBRC 14792 / USDA 110).